A 184-amino-acid chain; its full sequence is Elongation factor P 1 (184 aa).

This sequence belongs to the elongation factor P family.

It localises to the cytoplasm. It functions in the pathway protein biosynthesis; polypeptide chain elongation. Involved in peptide bond synthesis. Stimulates efficient translation and peptide-bond synthesis on native or reconstituted 70S ribosomes in vitro. Probably functions indirectly by altering the affinity of the ribosome for aminoacyl-tRNA, thus increasing their reactivity as acceptors for peptidyl transferase. The polypeptide is Elongation factor P 1 (efp1) (Protochlamydia amoebophila (strain UWE25)).